Reading from the N-terminus, the 213-residue chain is High frequency lysogenization protein HflD homolog (213 aa).

The stretch at 79–122 (QGLNAELTRYTLSLMVLERKLSSAKGALNTLGDRINGLQRQLDH) forms a coiled coil.

It belongs to the HflD family.

It localises to the cytoplasm. The protein resides in the cell inner membrane. The chain is High frequency lysogenization protein HflD homolog from Salmonella typhi.